The sequence spans 136 residues: Acidic phospholipase A2 EC-I (136 aa).

The signal sequence occupies residues 1-16 (MKTLWIVAVWLIAVEG). Cystine bridges form between Cys42–Cys129, Cys44–Cys60, Cys59–Cys111, Cys65–Cys136, Cys66–Cys104, Cys73–Cys97, and Cys91–Cys102. Residues Tyr43, Gly45, and Gly47 each coordinate Ca(2+). Residue His63 is part of the active site. Ca(2+) is bound at residue Asp64. Residue Asp105 is part of the active site. The tract at residues 112 to 133 (LGENVNTYDKKYKSYEDCTEEV) is may be responsible for inhibition of the platelet-aggregation activity.

It belongs to the phospholipase A2 family. Group II subfamily. D49 sub-subfamily. In terms of assembly, monomer. Ca(2+) serves as cofactor. In terms of tissue distribution, expressed by the venom gland.

It is found in the secreted. It carries out the reaction a 1,2-diacyl-sn-glycero-3-phosphocholine + H2O = a 1-acyl-sn-glycero-3-phosphocholine + a fatty acid + H(+). Its function is as follows. Snake venom phospholipase A2 (PLA2) that inhibits human platelet aggregation induced by ADP, collagen and epinephrin (possibly by binding the platelet receptor alpha-IIb/beta-III) and induces mild edema in the foot pads of mice. PLA2 catalyzes the calcium-dependent hydrolysis of the 2-acyl groups in 3-sn-phosphoglycerides. This chain is Acidic phospholipase A2 EC-I, found in Echis carinatus (Saw-scaled viper).